The chain runs to 74 residues: uncharacterized protein (74 aa).

This is an uncharacterized protein from Invertebrate iridescent virus 3 (IIV-3).